Here is a 472-residue protein sequence, read N- to C-terminus: Coronin-6 (472 aa).

5 WD repeats span residues G79–N119, G129–S169, I173–E212, A216–A259, and D264–H304. The disordered stretch occupies residues N409–H434. Residues P419–P429 show a composition bias toward low complexity. The stretch at L430–D469 forms a coiled coil.

This chain is Coronin-6 (Coro6), found in Rattus norvegicus (Rat).